We begin with the raw amino-acid sequence, 464 residues long: MSVIKEYRTVSEVVGPLMIVDQVAGVHFNELVEIQLHDGSKRQGQVLEVQEDKAMVQLFEGSSGINLEKAKVRFTGRPLELPVSEDMVGRIFNGMGKPIDGGPAILPEKYLDIDGQAINPVARDYPDEFIQTGISAIDHLNTLVRGQKLPVFSGSGLPHKELAAQIARQATVLNSDENFAVVFVAMGITFEEAEFFMNDLRETGAIDRSVLFINLANDPAIERIATPRIALTAAEYLAYEKDMHVLVIMTDMTNYCEALREVSAARREVPGRRGYPGYLYTNLSTLYERAGRLVGKKGSVTQIPILSMPEDDITHPIPDLTGYITEGQIILSRELYNSGYRPPINVLPSLSRLKDKGSGEGKTRGDHAATMNQLFAAYAQGKQAKELAVVLGESALSETDKLYVRFTDRFEQEYINQGFQTNRTIEESLDLGWELLSILPRTELKRIKDDMIDQYLPQTKEEER.

It belongs to the ATPase alpha/beta chains family.

Its function is as follows. Produces ATP from ADP in the presence of a proton gradient across the membrane. The V-type beta chain is a regulatory subunit. The protein is V-type ATP synthase beta chain of Streptococcus sanguinis (strain SK36).